A 957-amino-acid chain; its full sequence is Glycine dehydrogenase (decarboxylating) 2 (957 aa).

An N6-(pyridoxal phosphate)lysine modification is found at Lys-707.

It belongs to the GcvP family. As to quaternary structure, the glycine cleavage system is composed of four proteins: P, T, L and H. Pyridoxal 5'-phosphate serves as cofactor.

The enzyme catalyses N(6)-[(R)-lipoyl]-L-lysyl-[glycine-cleavage complex H protein] + glycine + H(+) = N(6)-[(R)-S(8)-aminomethyldihydrolipoyl]-L-lysyl-[glycine-cleavage complex H protein] + CO2. The glycine cleavage system catalyzes the degradation of glycine. The P protein binds the alpha-amino group of glycine through its pyridoxal phosphate cofactor; CO(2) is released and the remaining methylamine moiety is then transferred to the lipoamide cofactor of the H protein. This chain is Glycine dehydrogenase (decarboxylating) 2, found in Pseudomonas fluorescens (strain Pf0-1).